Consider the following 366-residue polypeptide: Ferrochelatase (366 aa).

2 residues coordinate Fe cation: H210 and E293.

Belongs to the ferrochelatase family.

The protein resides in the cytoplasm. It catalyses the reaction heme b + 2 H(+) = protoporphyrin IX + Fe(2+). Its pathway is porphyrin-containing compound metabolism; protoheme biosynthesis; protoheme from protoporphyrin-IX: step 1/1. In terms of biological role, catalyzes the ferrous insertion into protoporphyrin IX. This Leptospira borgpetersenii serovar Hardjo-bovis (strain L550) protein is Ferrochelatase.